Reading from the N-terminus, the 355-residue chain is MDHVYKGQLQAYALQHNLELPVYANEREGPPHAPRFRCNVTFCGQTFQSSEFFPTLKSAEHAAAKIAVASLTPQSPEGIDVAYKNLLQEIAQKESSLLPFYATATSGPSHAPTFTSTVEFAGKVFSGEEAKTKKLAEMSAAKVAFMSIKNGNSNQTGSPTLPSERQEDVNSNVKSSPQEIHSQPSSKVVMTPDTPSKGIKVNEDEFPDLHDAPASNAKEINVALNEPENPTNDGTLSALTTDGMKMNIASSSLPIPHNPTNVITLNAPAANGIKRNIAACSSWMPQNPTNDGSETSSCVVDESEKKKLIMGTGHLSIPTGQHVVCRPWNPEITLPQDAEMLFRDDKFIAYRLVKP.

2 DRBM domains span residues 4-73 and 82-150; these read VYKG…SLTP and AYKN…SIKN. Residues 149–188 are compositionally biased toward polar residues; sequence KNGNSNQTGSPTLPSERQEDVNSNVKSSPQEIHSQPSSKV. The segment at 149-193 is disordered; sequence KNGNSNQTGSPTLPSERQEDVNSNVKSSPQEIHSQPSSKVVMTPD.

Heterodimer with DRB1 or DRB5. Interacts with DCL4 and cauliflower mosaic virus (CaMV) transactivator/viroplasmin protein. Interaction with CaMV transactivator/viroplasmin protein inhibits RNA silencing ability of DRB4. Expressed in roots, leaf vasculature, shoot apical meristem (SAM) and developing anthers.

The protein resides in the nucleus. Its function is as follows. Double-stranded RNA-binding protein involved in RNA-mediated post-transcriptional gene silencing (PTGS). Functions in the trans-acting small interfering RNAs (ta-siRNAs) biogenesis by binding and assisting DICER-LIKE 4 (DCL4). Required for DCL4 activity. Required for the 21 nucleotide ta-siRNAs production of the TAS3 transcript in leaves but not in flowers. Plays an important role in silencing RNA of both DNA and RNA viruses. Involved with argonaute 7 (AGO7) and RDR6 in turnip crinkle virus (TCV) silencing. May not be directly involved in viral siRNA production. May stabilize the 21 nucleotide viral siRNAs and deliver them to the RISC complex. Targeted by the viral silencing suppressor (VSR) transactivator/viroplasmin (TAV) protein of the cauliflower mosaic virus (CaMV) that inactivates DRB4 function in RNA silencing. Probably not involved in the guide strand selection from RNA duplexes. Involved in leaf morphology through its function in ta-siRNA-mediated silencing. The chain is Double-stranded RNA-binding protein 4 (DBR4) from Arabidopsis thaliana (Mouse-ear cress).